A 347-amino-acid chain; its full sequence is Probable arabinogalactan endo-beta-1,4-galactanase A (347 aa).

Residues 1–16 form the signal peptide; sequence MLFSYLLATLPLLANA. The active-site Proton donor is the Glu150. The active-site Nucleophile is the Glu260.

Belongs to the glycosyl hydrolase 53 family.

Its subcellular location is the secreted. The enzyme catalyses The enzyme specifically hydrolyzes (1-&gt;4)-beta-D-galactosidic linkages in type I arabinogalactans.. Functionally, endogalactanase involved in the degradation of plant cell wall polysaccharides, and more particularly of hairy regions of pectin. The protein is Probable arabinogalactan endo-beta-1,4-galactanase A (galA) of Aspergillus oryzae (strain ATCC 42149 / RIB 40) (Yellow koji mold).